Reading from the N-terminus, the 1259-residue chain is Zinc finger protein BRUTUS-like At1g74770 (1259 aa).

A helical membrane pass occupies residues 441-461 (LLYTSIHVLPLGLLKCVILWF). Basic and acidic residues-rich tracts occupy residues 904–916 (KEEK…ESKK) and 924–934 (EGDKEQTDKMS). The tract at residues 904–938 (KEEKDLERSESKKICRGSNQEGDKEQTDKMSQKVS) is disordered. Residues 1018-1087 (PHSLIFGCNH…ANCSNTSCKS (70 aa)) form a CHY-type zinc finger. Residues C1025, H1027, C1038, C1039, C1045, C1048, H1049, H1055, C1067, C1070, C1080, C1085, C1094, C1097, H1108, C1109, C1112, C1115, H1127, C1128, C1131, C1134, H1142, and C1144 each coordinate Zn(2+). The CTCHY-type zinc finger occupies 1089–1152 (MGKYFCKICK…VCREKCLEDN (64 aa)). The segment at 1153-1195 (CPICHEYIFTSSSPVKALPCGHLMHSTCFQEYTCSHYTCPVCS) adopts an RING-type; atypical zinc-finger fold.

In terms of assembly, binds zinc and iron ions.

Its subcellular location is the membrane. The protein localises to the nucleus. Its pathway is protein modification; protein ubiquitination. Functionally, probable E3 ubiquitin-protein ligase that may regulate the response to iron deficiency and thus contributes to iron homeostasis. The chain is Zinc finger protein BRUTUS-like At1g74770 from Arabidopsis thaliana (Mouse-ear cress).